We begin with the raw amino-acid sequence, 312 residues long: DNA-directed RNA polymerase subunit alpha (312 aa).

The interval 1-226 (MIEFEKPTIT…EHLGLFTDLT (226 aa)) is alpha N-terminal domain (alpha-NTD). An alpha C-terminal domain (alpha-CTD) region spans residues 242 to 312 (SDDRMLDRTI…DLGLGLKKDK (71 aa)).

This sequence belongs to the RNA polymerase alpha chain family. Homodimer. The RNAP catalytic core consists of 2 alpha, 1 beta, 1 beta' and 1 omega subunit. When a sigma factor is associated with the core the holoenzyme is formed, which can initiate transcription.

The catalysed reaction is RNA(n) + a ribonucleoside 5'-triphosphate = RNA(n+1) + diphosphate. Its function is as follows. DNA-dependent RNA polymerase catalyzes the transcription of DNA into RNA using the four ribonucleoside triphosphates as substrates. The protein is DNA-directed RNA polymerase subunit alpha of Streptococcus suis (strain 98HAH33).